Consider the following 56-residue polypeptide: Male-specific sperm protein Mst87F (56 aa).

The protein belongs to the MST(3)CGP family. Testis.

The polypeptide is Male-specific sperm protein Mst87F (Mst87F) (Drosophila melanogaster (Fruit fly)).